A 334-amino-acid chain; its full sequence is Ribosomal RNA small subunit methyltransferase H (334 aa).

S-adenosyl-L-methionine-binding positions include 34 to 36 (GGY), Asp52, Ala87, Asp100, and Gln107.

Belongs to the methyltransferase superfamily. RsmH family.

The protein resides in the cytoplasm. The catalysed reaction is cytidine(1402) in 16S rRNA + S-adenosyl-L-methionine = N(4)-methylcytidine(1402) in 16S rRNA + S-adenosyl-L-homocysteine + H(+). Functionally, specifically methylates the N4 position of cytidine in position 1402 (C1402) of 16S rRNA. In Maricaulis maris (strain MCS10) (Caulobacter maris), this protein is Ribosomal RNA small subunit methyltransferase H.